Consider the following 329-residue polypeptide: AUGMIN subunit 7 (329 aa).

Residues 169–197 are a coiled coil; sequence DVSELETKLSEQAKILSNLQQKVDDLAAK.

As to quaternary structure, part of the augmin complex composed of 8 subunits. The complex acts on microtubules and interacts with gamma-tubulin in spindles and the phragmoplast.

The protein resides in the cytoplasm. It localises to the cytoskeleton. It is found in the spindle. Its subcellular location is the phragmoplast. Functionally, contributes to the assembly of the acentrosomal spindle and phragmoplast microtubule arrays as part of the augmin complex. Regulates the association of gamma-tubulin with the spindle and phragmoplast microtubules. In Arabidopsis thaliana (Mouse-ear cress), this protein is AUGMIN subunit 7.